The following is a 140-amino-acid chain: Type II secretion system core protein G (140 aa).

The propeptide at 1 to 6 (MQRQRG) is leader sequence. Phe-7 carries the N-methylphenylalanine modification. A helical transmembrane segment spans residues 7 to 27 (FTLLEIMVVIVILGVLASLVV). The interval 120-140 (LGPDGVPESNDDIGNWTIGKK) is disordered.

The protein belongs to the GSP G family. As to quaternary structure, type II secretion system is composed of four main components: the outer membrane complex, the inner membrane complex, the cytoplasmic secretion ATPase and the periplasm-spanning pseudopilus. Forms homomultimers. In terms of processing, cleaved by the prepilin peptidase. Methylated by prepilin peptidase at the amino group of the N-terminal phenylalanine once the leader sequence is cleaved.

The protein localises to the cell inner membrane. Functionally, core component of the type II secretion system required for the energy-dependent secretion of extracellular factors such as proteases and toxins from the periplasm. Pseudopilin (pilin-like) protein that polymerizes to form the pseudopilus. Further polymerization triggers pseudopilus growth. The protein is Type II secretion system core protein G (pulG) of Klebsiella pneumoniae.